The chain runs to 341 residues: uncharacterized protein (341 aa).

This is an uncharacterized protein from Methanocaldococcus jannaschii (strain ATCC 43067 / DSM 2661 / JAL-1 / JCM 10045 / NBRC 100440) (Methanococcus jannaschii).